The chain runs to 502 residues: Probable cytosol aminopeptidase (502 aa).

Residues Lys275 and Asp280 each coordinate Mn(2+). Lys287 is a catalytic residue. Residues Asp298, Asp357, and Glu359 each contribute to the Mn(2+) site. Residue Arg361 is part of the active site.

The protein belongs to the peptidase M17 family. It depends on Mn(2+) as a cofactor.

Its subcellular location is the cytoplasm. It catalyses the reaction Release of an N-terminal amino acid, Xaa-|-Yaa-, in which Xaa is preferably Leu, but may be other amino acids including Pro although not Arg or Lys, and Yaa may be Pro. Amino acid amides and methyl esters are also readily hydrolyzed, but rates on arylamides are exceedingly low.. The enzyme catalyses Release of an N-terminal amino acid, preferentially leucine, but not glutamic or aspartic acids.. Its function is as follows. Presumably involved in the processing and regular turnover of intracellular proteins. Catalyzes the removal of unsubstituted N-terminal amino acids from various peptides. The sequence is that of Probable cytosol aminopeptidase from Ralstonia pickettii (strain 12J).